The following is a 183-amino-acid chain: CyanoP (183 aa).

The first 19 residues, 1–19 (MLQRFFATALAIFVVLLGG), serve as a signal peptide directing secretion. Cysteine 20 is lipidated: N-palmitoyl cysteine. Cysteine 20 is lipidated: S-diacylglycerol cysteine. Aspartate 31, aspartate 34, aspartate 54, histidine 58, threonine 63, glutamate 87, aspartate 91, histidine 142, glutamate 163, and glutamate 164 together coordinate Zn(2+).

This sequence belongs to the PsbP family. CyanoP subfamily. Monomer. Present in very small amounts in PSII. It depends on Zn(2+) as a cofactor.

The protein resides in the cellular thylakoid membrane. Functionally, plays a role in the early stages of photosystem II (PSII) assembly; binds to D2 (psbD) and may facilitate its incorporation into PSII. Present in less than 1% of PSII preparations. The sequence is that of CyanoP from Thermosynechococcus vestitus (strain NIES-2133 / IAM M-273 / BP-1).